We begin with the raw amino-acid sequence, 352 residues long: N-lysine methyltransferase KMT5A (352 aa).

The segment at 21–51 (AVAATAPGPEMVERRGPGRPRTNGENVFTGQ) is disordered. Serine 59 is modified (phosphoserine). Residues 87 to 202 (PLAGIYRKRD…KSKAELQSEE (116 aa)) form a disordered region. Basic and acidic residues predominate over residues 109 to 121 (MKAEEQKIKDARR). At threonine 140 the chain carries Phosphothreonine. The span at 156–172 (GLKKPVRGKQAPRKKAQ) shows a compositional bias: basic residues. The SET domain occupies 216–337 (EGMKIDLIDG…AGEELLYDYG (122 aa)). Residues 226–228 (KGR), tyrosine 271, and 298–299 (NH) each bind S-adenosyl-L-methionine.

The protein belongs to the class V-like SAM-binding methyltransferase superfamily. Histone-lysine methyltransferase family. PR/SET subfamily. As to quaternary structure, interacts with L3MBTL1. Interacts with SIRT2 (phosphorylated form); the interaction is direct, stimulates KMT5A-mediated methyltransferase activity at histone H4 'Lys-20' (H4K20me1) and is increased in a H(2)O(2)-induced oxidative stress-dependent manner. Post-translationally, ubiquitinated and degraded by the DCX(DTL) complex.

The protein localises to the nucleus. It localises to the chromosome. It catalyses the reaction L-lysyl(20)-[histone H4] + S-adenosyl-L-methionine = N(6)-methyl-L-lysyl(20)-[histone H4] + S-adenosyl-L-homocysteine + H(+). The enzyme catalyses L-lysyl-[protein] + S-adenosyl-L-methionine = N(6)-methyl-L-lysyl-[protein] + S-adenosyl-L-homocysteine + H(+). Protein-lysine N-methyltransferase that monomethylates both histones and non-histone proteins. Specifically monomethylates 'Lys-20' of histone H4 (H4K20me1). H4K20me1 is enriched during mitosis and represents a specific tag for epigenetic transcriptional repression. Mainly functions in euchromatin regions, thereby playing a central role in the silencing of euchromatic genes. Required for cell proliferation, probably by contributing to the maintenance of proper higher-order structure of DNA during mitosis. Involved in chromosome condensation and proper cytokinesis. Nucleosomes are preferred as substrate compared to free histones. Mediates monomethylation of p53/TP53 at 'Lys-382', leading to repress p53/TP53-target genes. Plays a negative role in TGF-beta response regulation and a positive role in cell migration. This is N-lysine methyltransferase KMT5A from Bos taurus (Bovine).